The following is an 86-amino-acid chain: Toxin TdNa7 (86 aa).

A signal peptide spans 1–20 (MTRFVLFLSCFFLIGMVVEC). The region spanning 21 to 83 (KDGYLMGPDG…TWERATNTCG (63 aa)) is the LCN-type CS-alpha/beta domain. Intrachain disulfides connect C31–C82, C35–C57, C43–C63, and C47–C65. Position 84 is a lysine amide (K84).

It belongs to the long (4 C-C) scorpion toxin superfamily. Sodium channel inhibitor family. Beta subfamily. In terms of tissue distribution, expressed by the venom gland.

It is found in the secreted. Its function is as follows. Beta toxins bind voltage-independently at site-4 of sodium channels (Nav) and shift the voltage of activation toward more negative potentials thereby affecting sodium channel activation and promoting spontaneous and repetitive firing. The chain is Toxin TdNa7 from Tityus discrepans (Venezuelan scorpion).